Reading from the N-terminus, the 146-residue chain is Large ribosomal subunit protein uL15 (146 aa).

A disordered region spans residues 1 to 56 (MKLHELRAAEGANKASKRVGRGTGSGLGKTSGKGQNGQNSRSGGGVRPGFEGGQMP). Gly residues-rich tracts occupy residues 21-35 (RGTGSGLGKTSGKGQ) and 42-52 (SGGGVRPGFEG).

The protein belongs to the universal ribosomal protein uL15 family. Part of the 50S ribosomal subunit.

Functionally, binds to the 23S rRNA. The sequence is that of Large ribosomal subunit protein uL15 from Clostridium botulinum (strain Loch Maree / Type A3).